The sequence spans 176 residues: I-Kappa-B like protein G1 (176 aa).

3 ANK repeats span residues 56–88 (EGRQCTHIAAEYDVSNAVMKIELLVMLGADINS), 93–123 (FGNTLLHIAAGTENYQLAEWLCKKPGVELGA), and 127–156 (LYKTAYHIAYERQNARMMEILRVNGAVCDD).

Belongs to the polydnaviridae I-Kappa-B-like protein family.

Its function is as follows. Suppresses the host immune response through NF-kappa-B inactivation. Possesses ankyrin repeat domains required for NF-kappa-B binding but lacks the regulatory regions required for dissociation from NF-kappa-B and degradation. Therefore, prevents host NF-kappa-B release and subsequent activation. The polypeptide is I-Kappa-B like protein G1 (G3) (Microplitis demolitor (Parasitoid wasp)).